We begin with the raw amino-acid sequence, 228 residues long: DNA-binding response regulator MtrA (228 aa).

A Response regulatory domain is found at R7 to L120. Position 56 is a 4-aspartylphosphate (D56). The ompR/PhoB-type DNA-binding region spans A128–P227.

As to quaternary structure, probably a monomer when inactive, phosphorylation may permit it to oligomerize. The monomeric form does not seem to be phosphorylated. In terms of processing, phosphorylated by MtrB.

Its subcellular location is the cytoplasm. Member of the two-component regulatory system MtrA/MtrB, responding to environmental signals. Controls expression of a number of genes including dnaA, ripA, fbpB and probably itself. Probably plays a role in cell division. The sequence is that of DNA-binding response regulator MtrA (mtrA) from Mycolicibacterium smegmatis (strain ATCC 700084 / mc(2)155) (Mycobacterium smegmatis).